Here is a 141-residue protein sequence, read N- to C-terminus: Large ribosomal subunit protein uL16 (141 aa).

The interval 1-23 (MLMPKRTKYRKQMKGRNRGKAHR) is disordered.

The protein belongs to the universal ribosomal protein uL16 family. In terms of assembly, part of the 50S ribosomal subunit.

In terms of biological role, binds 23S rRNA and is also seen to make contacts with the A and possibly P site tRNAs. This chain is Large ribosomal subunit protein uL16, found in Helicobacter pylori (strain J99 / ATCC 700824) (Campylobacter pylori J99).